We begin with the raw amino-acid sequence, 207 residues long: Large ribosomal subunit protein uL4 (207 aa).

Residues 50–76 are disordered; that stretch reads AVKNRSAVSGGGRKPWKQKGTGRARQG.

The protein belongs to the universal ribosomal protein uL4 family. As to quaternary structure, part of the 50S ribosomal subunit.

Functionally, one of the primary rRNA binding proteins, this protein initially binds near the 5'-end of the 23S rRNA. It is important during the early stages of 50S assembly. It makes multiple contacts with different domains of the 23S rRNA in the assembled 50S subunit and ribosome. Forms part of the polypeptide exit tunnel. The chain is Large ribosomal subunit protein uL4 from Macrococcus caseolyticus (strain JCSC5402) (Macrococcoides caseolyticum).